Reading from the N-terminus, the 370-residue chain is Aminomethyltransferase (370 aa).

This sequence belongs to the GcvT family. As to quaternary structure, the glycine cleavage system is composed of four proteins: P, T, L and H.

It carries out the reaction N(6)-[(R)-S(8)-aminomethyldihydrolipoyl]-L-lysyl-[protein] + (6S)-5,6,7,8-tetrahydrofolate = N(6)-[(R)-dihydrolipoyl]-L-lysyl-[protein] + (6R)-5,10-methylene-5,6,7,8-tetrahydrofolate + NH4(+). The glycine cleavage system catalyzes the degradation of glycine. This Clostridium botulinum (strain Kyoto / Type A2) protein is Aminomethyltransferase.